The following is a 200-amino-acid chain: Sec-independent protein translocase protein TatB (200 aa).

The helical transmembrane segment at 2 to 22 threads the bilayer; the sequence is LPDIGGTELLIIAAVALIVVG. Positions 160-200 are disordered; it reads KAPRKRASQKQEITVEAPKAVRAPRKRASKAGDSTASDIVS. The segment covering 191–200 has biased composition (polar residues); that stretch reads GDSTASDIVS.

Belongs to the TatB family. The Tat system comprises two distinct complexes: a TatABC complex, containing multiple copies of TatA, TatB and TatC subunits, and a separate TatA complex, containing only TatA subunits. Substrates initially bind to the TatABC complex, which probably triggers association of the separate TatA complex to form the active translocon.

It is found in the cell inner membrane. In terms of biological role, part of the twin-arginine translocation (Tat) system that transports large folded proteins containing a characteristic twin-arginine motif in their signal peptide across membranes. Together with TatC, TatB is part of a receptor directly interacting with Tat signal peptides. TatB may form an oligomeric binding site that transiently accommodates folded Tat precursor proteins before their translocation. The chain is Sec-independent protein translocase protein TatB from Caulobacter vibrioides (strain ATCC 19089 / CIP 103742 / CB 15) (Caulobacter crescentus).